Reading from the N-terminus, the 242-residue chain is ATP synthase subunit a (242 aa).

The next 6 membrane-spanning stretches (helical) occupy residues 29-49 (SSIY…LAFY), 84-104 (FIPL…LGMT), 114-134 (IIVT…VGFV), 140-160 (FLTL…MIVI), 181-201 (MAGH…MIYL), and 203-223 (FLPI…AILQ).

It belongs to the ATPase A chain family. As to quaternary structure, F-type ATPases have 2 components, CF(1) - the catalytic core - and CF(0) - the membrane proton channel. CF(1) has five subunits: alpha(3), beta(3), gamma(1), delta(1), epsilon(1). CF(0) has three main subunits: a(1), b(2) and c(9-12). The alpha and beta chains form an alternating ring which encloses part of the gamma chain. CF(1) is attached to CF(0) by a central stalk formed by the gamma and epsilon chains, while a peripheral stalk is formed by the delta and b chains.

It is found in the cell inner membrane. Functionally, key component of the proton channel; it plays a direct role in the translocation of protons across the membrane. This Rickettsia conorii (strain ATCC VR-613 / Malish 7) protein is ATP synthase subunit a.